A 459-amino-acid polypeptide reads, in one-letter code: Glycosyl hydrolase family 109 protein (459 aa).

Residues 1 to 31 (MHNIHRRHFLKAAGAVTAGLITANITASTHA) constitute a signal peptide (tat-type signal). Residues 64 to 65 (ER), Asp86, 135 to 138 (WEWH), 155 to 156 (EV), and Asn184 contribute to the NAD(+) site. Substrate-binding positions include Tyr213, Arg232, 244 to 247 (YPTH), and Tyr326. NAD(+) is bound at residue Tyr244.

This sequence belongs to the Gfo/Idh/MocA family. Glycosyl hydrolase 109 subfamily. Requires NAD(+) as cofactor. In terms of processing, predicted to be exported by the Tat system. The position of the signal peptide cleavage has not been experimentally proven.

In terms of biological role, glycosidase. This is Glycosyl hydrolase family 109 protein from Shewanella sp. (strain W3-18-1).